The primary structure comprises 76 residues: U7-lycotoxin-Ls1c (76 aa).

The signal sequence occupies residues 1–22 (MKLIIFTGLALFLLVSLIDVEA). The propeptide occupies 23–26 (QNEG).

This sequence belongs to the neurotoxin 19 (CSTX) family. 07 (U7-Lctx) subfamily. In terms of processing, contains 4 disulfide bonds. Expressed by the venom gland.

Its subcellular location is the secreted. This Lycosa singoriensis (Wolf spider) protein is U7-lycotoxin-Ls1c.